A 190-amino-acid chain; its full sequence is Elongation factor P-like protein (190 aa).

It belongs to the elongation factor P family.

This is Elongation factor P-like protein from Pseudoalteromonas translucida (strain TAC 125).